A 546-amino-acid chain; its full sequence is Glucose-6-phosphate isomerase (546 aa).

The active-site Proton donor is Glu353. Catalysis depends on residues His384 and Lys512.

Belongs to the GPI family.

The protein localises to the cytoplasm. It carries out the reaction alpha-D-glucose 6-phosphate = beta-D-fructose 6-phosphate. It participates in carbohydrate biosynthesis; gluconeogenesis. Its pathway is carbohydrate degradation; glycolysis; D-glyceraldehyde 3-phosphate and glycerone phosphate from D-glucose: step 2/4. Its function is as follows. Catalyzes the reversible isomerization of glucose-6-phosphate to fructose-6-phosphate. The polypeptide is Glucose-6-phosphate isomerase (Actinobacillus pleuropneumoniae serotype 5b (strain L20)).